A 234-amino-acid polypeptide reads, in one-letter code: Short neuropeptide F (234 aa).

The N-terminal stretch at 1–22 is a signal peptide; the sequence is MYRINLTTFTLLLVLAVGSLMS. The propeptide occupies 23 to 56; that stretch reads ESLHPSDGAINDLYEYLLQREYAAPVSYADHQIK. Phenylalanine amide is present on residues phenylalanine 69 and phenylalanine 101. A Tryptophan amide modification is found at tryptophan 132. At phenylalanine 165 the chain carries Phenylalanine amide. The segment covering 181–190 has biased composition (polar residues); sequence TTGQQAQPAN. Residues 181 to 234 are disordered; that stretch reads TTGQQAQPANEASEKRAPTQRLRWGRSDPALAKDSSEDKALDVEESENTNADDK. Tryptophan 204 is subject to Tryptophan amide. The propeptide occupies 207–234; that stretch reads SDPALAKDSSEDKALDVEESENTNADDK.

This sequence belongs to the NPY family. Expressed in all body parts of larva, pupae and adults.

Its subcellular location is the secreted. Functionally, plays a role in controlling food intake and regulating body size. The chain is Short neuropeptide F from Anopheles gambiae (African malaria mosquito).